The chain runs to 193 residues: MKTYQEFIAEASVVKAKGINKDEWTYRSGNGFDPKTAPIERYLATKASDFKAFAWEGLRWRTDLNIEVDGLKFAHIEDVVASNLDSEFVKADADLRRWNLKLFSKQKGPKFVPKAGKWVIDNKLAKAVNFAGLEFAKHKSSWKGLDAMAFRKEFADVMTKGGFKAEIDTSKGKFKDANIQYAYAVANAARGNS.

A propeptide spanning residues 1–10 (MKTYQEFIAE) is cleaved from the precursor.

Internal protein III is one of four proteins in a complex that functions in bacteriophage head maturation. The polypeptide is Internal protein III (ipi3) (Enterobacteria phage T4 (Bacteriophage T4)).